The chain runs to 112 residues: MAKNQNQGQIAEHSARRYLEQRGLTFVEQNVRYRFGEIDIVMKDGSDWVFVEVKYRSPSQYGGAVNALSQAQTLRIRKAASHYIQINRIDAICRFDVVAVDPDAMQWIRDAF.

This sequence belongs to the UPF0102 family.

The protein is UPF0102 protein Spea_0251 of Shewanella pealeana (strain ATCC 700345 / ANG-SQ1).